Here is a 302-residue protein sequence, read N- to C-terminus: UDP-N-acetylenolpyruvoylglucosamine reductase (302 aa).

Positions 27 to 192 (KVGGAVDYLA…LSAKFALRPG (166 aa)) constitute an FAD-binding PCMH-type domain. Arg-171 is a catalytic residue. Ser-221 acts as the Proton donor in catalysis. Glu-291 is a catalytic residue.

This sequence belongs to the MurB family. FAD is required as a cofactor.

Its subcellular location is the cytoplasm. The catalysed reaction is UDP-N-acetyl-alpha-D-muramate + NADP(+) = UDP-N-acetyl-3-O-(1-carboxyvinyl)-alpha-D-glucosamine + NADPH + H(+). It functions in the pathway cell wall biogenesis; peptidoglycan biosynthesis. Cell wall formation. The chain is UDP-N-acetylenolpyruvoylglucosamine reductase from Streptococcus suis (strain 98HAH33).